Reading from the N-terminus, the 302-residue chain is Late embryogenesis abundant protein D-29 (302 aa).

Disordered stretches follow at residues 25 to 93 (HMPS…AKEY), 168 to 193 (VKNA…LADS), and 205 to 302 (AKEK…NHKN). Composition is skewed to basic and acidic residues over residues 34-70 (RDYS…HAAN) and 79-93 (AKDR…AKEY). The segment covering 205–286 (AKEKVRDMAD…KAEETIESAK (82 aa)) has biased composition (basic and acidic residues).

This sequence belongs to the LEA type 1 family.

Functionally, LEA protein are late embryonic proteins abundant in higher plant seed embryos. There are two subsets of LEA proteins (5a and 5b), the first ones are expressed when the cotyledon weight reach 80 mg and the second set are expressed above 100 mg. The function of those proteins is not known. This Gossypium hirsutum (Upland cotton) protein is Late embryogenesis abundant protein D-29.